A 305-amino-acid chain; its full sequence is NADH-cytochrome b5 reductase 1 (305 aa).

A helical transmembrane segment spans residues 8–28; the sequence is VLLASLGVGLFTLFGLALGTY. The region spanning 44–156 is the FAD-binding FR-type domain; the sequence is DEKYLLRLLD…RGPSGLLSYA (113 aa). FAD is bound by residues 136 to 166 and 175 to 210; these read DSLK…IQPN and VAKK…QCFL.

It belongs to the flavoprotein pyridine nucleotide cytochrome reductase family. Requires FAD as cofactor.

It localises to the membrane. The catalysed reaction is 2 Fe(III)-[cytochrome b5] + NADH = 2 Fe(II)-[cytochrome b5] + NAD(+) + H(+). NADH-cytochrome b5 reductases are involved in desaturation and elongation of fatty acids, cholesterol biosynthesis, drug metabolism, and, in erythrocyte, methemoglobin reduction. The sequence is that of NADH-cytochrome b5 reductase 1 (Cyb5r1) from Rattus norvegicus (Rat).